A 124-amino-acid chain; its full sequence is Ribonuclease P protein component 2 (124 aa).

The protein belongs to the eukaryotic/archaeal RNase P protein component 2 family. As to quaternary structure, consists of a catalytic RNA component and at least 4-5 protein subunits.

It localises to the cytoplasm. The enzyme catalyses Endonucleolytic cleavage of RNA, removing 5'-extranucleotides from tRNA precursor.. Functionally, part of ribonuclease P, a protein complex that generates mature tRNA molecules by cleaving their 5'-ends. The chain is Ribonuclease P protein component 2 from Methanothermobacter thermautotrophicus (strain ATCC 29096 / DSM 1053 / JCM 10044 / NBRC 100330 / Delta H) (Methanobacterium thermoautotrophicum).